Consider the following 646-residue polypeptide: Cytochrome b translation regulator cbp8 (646 aa).

Component of a complex, at least composed of cbp7 and cbp8.

It is found in the mitochondrion. Its function is as follows. Translation factor for cob1/cytochrome b; plays a role in cob1 mRNA stabilization and required for correct folding of the protein. This chain is Cytochrome b translation regulator cbp8, found in Schizosaccharomyces pombe (strain 972 / ATCC 24843) (Fission yeast).